The sequence spans 228 residues: Large ribosomal subunit protein bL25 (228 aa).

A disordered region spans residues 198–228 (AAIAEAQSAEAAEEKAEAEAEATNEKNDTEE). Positions 209 to 228 (AEEKAEAEAEATNEKNDTEE) are enriched in basic and acidic residues.

Belongs to the bacterial ribosomal protein bL25 family. CTC subfamily. As to quaternary structure, part of the 50S ribosomal subunit; part of the 5S rRNA/L5/L18/L25 subcomplex. Contacts the 5S rRNA. Binds to the 5S rRNA independently of L5 and L18.

This is one of the proteins that binds to the 5S RNA in the ribosome where it forms part of the central protuberance. The polypeptide is Large ribosomal subunit protein bL25 (Methylorubrum populi (strain ATCC BAA-705 / NCIMB 13946 / BJ001) (Methylobacterium populi)).